The primary structure comprises 147 residues: Allograft inflammatory factor 1 (147 aa).

Ser2 carries the post-translational modification N-acetylserine. Lys11 carries the N6-acetyllysine modification. Phosphoserine is present on Ser39. Positions Ser45 to Pro80 constitute an EF-hand 1 domain. Ca(2+) contacts are provided by Asp58, Asn60, Asn62, Asp64, Thr100, and Asp105. In terms of domain architecture, EF-hand 2; degenerate spans Lys81–Ser115. A disordered region spans residues Ala128–Pro147.

Homodimer (Potential). Monomer. Interacts with LCP1. Phosphorylated on serine residues. Detected in T-lymphocytes and peripheral blood mononuclear cells.

It localises to the cytoplasm. Its subcellular location is the cytoskeleton. It is found in the cell projection. The protein resides in the ruffle membrane. The protein localises to the phagocytic cup. In terms of biological role, actin-binding protein that enhances membrane ruffling and RAC activation. Enhances the actin-bundling activity of LCP1. Binds calcium. Plays a role in RAC signaling and in phagocytosis. May play a role in macrophage activation and function. Promotes the proliferation of vascular smooth muscle cells and of T-lymphocytes. Enhances lymphocyte migration. Plays a role in vascular inflammation. In Homo sapiens (Human), this protein is Allograft inflammatory factor 1 (AIF1).